Here is a 287-residue protein sequence, read N- to C-terminus: Telomere repeat-binding factor 5 (287 aa).

The region spanning 1-62 is the HTH myb-type domain; sequence MGNQKLKWTA…WRNLSVPPGT (62 aa). Residues 28–58 constitute a DNA-binding region (H-T-H motif); it reads WKNILRDPEFADQLIHRSNIDLKDKWRNLSV. The disordered stretch occupies residues 58–107; sequence VPPGTQSLTNKARPAKVKEEGDTPAADANDAVTIPRPIPTIPPPPGRRTL. Residues 93–103 show a composition bias toward pro residues; the sequence is RPIPTIPPPPG. Positions 119–193 constitute an H15 domain; it reads NAPRYDGVIF…SIQNFYKIPD (75 aa). The stretch at 233–259 forms a coiled coil; the sequence is AACKVVEAENKIDVAKLAAEEFEKMTK.

It belongs to the histone H1/H5 family. SMH subfamily.

The protein resides in the nucleus. The protein localises to the chromosome. Its function is as follows. Binds preferentially double-stranded telomeric repeats. The sequence is that of Telomere repeat-binding factor 5 from Arabidopsis thaliana (Mouse-ear cress).